The sequence spans 332 residues: MEPVGRKRSRKAAKAQLEAQVTAAQGATKEGSGIASNFPGQPTMEPVGRKRSRKAAKAQLEAQVRAAPAKKHTGKDPVRDECEERNPFTETREEDVTDEHGEREPFAEKDEHTGIHTMKLEHIAADIKKGLAAKREMIKIDKAAYRKTKNTIERALKKKQLKRQKRDYRHTRKLLNVLKEYIAEKQKDDEAEEAEAAAAAAEAAAAAEAAAAAAEVIVVEDEEEEEKEEEEEKEEEEEEGEEEGGGEEGEEGGGGGEGEETEEEEEEEEEEEEEEQIKAFQEKQKRWQQPTGVRSWRLREMKPLLEQLLKAAKDTKDNYCIISSSEESELDN.

The span at 1–13 shows a compositional bias: basic residues; it reads MEPVGRKRSRKAA. 2 disordered regions span residues 1-114 and 186-293; these read MEPV…EHTG and QKDD…PTGV. Composition is skewed to basic and acidic residues over residues 74-91 and 98-114; these read GKDPVRDECEERNPFTET and DEHGEREPFAEKDEHTG. Residues 196-217 show a composition bias toward low complexity; sequence AAAAAAEAAAAAEAAAAAAEVI. Positions 218–275 are enriched in acidic residues; it reads VVEDEEEEEKEEEEEKEEEEEEGEEEGGGEEGEEGGGGGEGEETEEEEEEEEEEEEEE. Positions 276 to 285 are enriched in basic and acidic residues; it reads QIKAFQEKQK.

It belongs to the XLR/SYCP3 family. Expressed exclusively in testis.

The protein resides in the nucleus. The protein localises to the nucleolus. The sequence is that of Protein FAM9A from Homo sapiens (Human).